A 48-amino-acid polypeptide reads, in one-letter code: Light-harvesting protein B-870 beta chain (48 aa).

At alanine 2–lysine 21 the chain is on the cytoplasmic side. 2 residues coordinate a bacteriochlorophyll: histidine 20 and histidine 38. Residues phenylalanine 22–tryptophan 44 traverse the membrane as a helical segment. Residues arginine 45–leucine 48 are Periplasmic-facing.

An alpha/beta heterodimer. The core complex is formed by different alpha and beta chains, binding bacteriochlorophyll molecules, and arranged most probably in tetrameric structures disposed around the reaction center. The non-pigmented gamma chains may constitute additional components.

It is found in the cell inner membrane. Antenna complexes are light-harvesting systems, which transfer the excitation energy to the reaction centers. This is Light-harvesting protein B-870 beta chain (pufB) from Rubrivivax gelatinosus (Rhodocyclus gelatinosus).